The chain runs to 34 residues: Stromal 70 kDa heat shock-related protein, chloroplastic (34 aa).

This sequence belongs to the heat shock protein 70 family.

Its subcellular location is the plastid. The protein localises to the chloroplast stroma. Functionally, interacts with newly imported chloroplast proteins to assist in their maturation. This is Stromal 70 kDa heat shock-related protein, chloroplastic from Cucurbita maxima (Pumpkin).